Consider the following 259-residue polypeptide: 5'-nucleotidase SurE (259 aa).

4 residues coordinate a divalent metal cation: D8, D9, S40, and N92.

Belongs to the SurE nucleotidase family. It depends on a divalent metal cation as a cofactor.

The protein resides in the cytoplasm. It carries out the reaction a ribonucleoside 5'-phosphate + H2O = a ribonucleoside + phosphate. In terms of biological role, nucleotidase that shows phosphatase activity on nucleoside 5'-monophosphates. In Xanthomonas axonopodis pv. citri (strain 306), this protein is 5'-nucleotidase SurE.